The chain runs to 410 residues: Cathepsin D (410 aa).

An N-terminal signal peptide occupies residues 1–18 (MQPPSLLLLVLGLLAAPA). The propeptide at 19–64 (AALVRIPLHKFTSVRRTMTELGGPVEDLIAKGPISKYAQGAPAVTG) is activation peptide. Residues 79–405 (YYGEIGIGTP…DRDQNRVGLA (327 aa)) enclose the Peptidase A1 domain. 2 cysteine pairs are disulfide-bonded: Cys91–Cys160 and Cys110–Cys117. Asp97 is a catalytic residue. N-linked (GlcNAc...) asparagine glycosylation is found at Asn134 and Asn261. A disulfide bridge links Cys284 with Cys288. Asp293 is a catalytic residue. Cys327 and Cys364 are disulfide-bonded.

The protein belongs to the peptidase A1 family. Consists of a light chain and a heavy chain. Interacts with ADAM30; this leads to activation of CTSD. Interacts with GRN; stabilizes CTSD; increases its proteolytic activity. Post-translationally, N- and O-glycosylated. In terms of processing, undergoes proteolytic cleavage and activation by ADAM30.

It is found in the lysosome. The protein localises to the melanosome. It localises to the secreted. Its subcellular location is the extracellular space. It carries out the reaction Specificity similar to, but narrower than, that of pepsin A. Does not cleave the 4-Gln-|-His-5 bond in B chain of insulin.. Its function is as follows. Acid protease active in intracellular protein breakdown. Plays a role in APP processing following cleavage and activation by ADAM30 which leads to APP degradation. The chain is Cathepsin D (CTSD) from Canis lupus familiaris (Dog).